Consider the following 236-residue polypeptide: MDGAYGHVHNGSPMAVDGEESGAGTGTGAGADGLYPTSTDTAAHAVSLPRSVGDFAAVVRAVSAEAADALRSGAGPPAEAWPRVYRMFCDMFGRYAASPMPVFHSADPLRRAVGRYLVDLGAAPVETHAELSGRMLFCAYWCCLGHAFACSRPQMYERACARFFETRLGIGETPPADAERYWAALLNMAGAEPELFPRHAAAAAYLRARGRKLPLQLPSAHRTAKTVAVTGQSINF.

The interval 1–32 (MDGAYGHVHNGSPMAVDGEESGAGTGTGAGAD) is disordered. Residues 21–31 (SGAGTGTGAGA) show a composition bias toward gly residues. A zinc finger spans residues 138-150 (CAYWCCLGHAFAC).

Belongs to the herpesviridae US10 family. In terms of processing, phosphorylated.

The protein resides in the virion tegument. The protein localises to the host nucleus matrix. In Equine herpesvirus 1 (strain Ab4p) (EHV-1), this protein is Virion protein US10 homolog.